A 253-amino-acid polypeptide reads, in one-letter code: Putative B3 domain-containing protein Os03g0619850 (253 aa).

The segment at residues 26 to 119 (MSCFLIRMTT…CFEVMILDSD (94 aa)) is a DNA-binding region (TF-B3). Disordered stretches follow at residues 126 to 150 (LKSNRNGVSDESQESEDSEGPAGPP) and 230 to 253 (HRDADQERQMHHQAVPDQWLEQDS). The span at 230 to 239 (HRDADQERQM) shows a compositional bias: basic and acidic residues.

It is found in the nucleus. The chain is Putative B3 domain-containing protein Os03g0619850 from Oryza sativa subsp. japonica (Rice).